The following is a 200-amino-acid chain: Potassium-transporting ATPase KdpC subunit (200 aa).

The helical transmembrane segment at 6 to 26 (PAVVLLILLTLITGIAYPLLT) threads the bilayer.

Belongs to the KdpC family. In terms of assembly, the system is composed of three essential subunits: KdpA, KdpB and KdpC.

It localises to the cell inner membrane. Functionally, part of the high-affinity ATP-driven potassium transport (or Kdp) system, which catalyzes the hydrolysis of ATP coupled with the electrogenic transport of potassium into the cytoplasm. This subunit acts as a catalytic chaperone that increases the ATP-binding affinity of the ATP-hydrolyzing subunit KdpB by the formation of a transient KdpB/KdpC/ATP ternary complex. This chain is Potassium-transporting ATPase KdpC subunit, found in Yersinia enterocolitica serotype O:8 / biotype 1B (strain NCTC 13174 / 8081).